The sequence spans 114 residues: U17-barytoxin-Tl1d (114 aa).

The N-terminal stretch at 1 to 20 (MKTIIVFLSLLVLATKFGDA) is a signal peptide. Positions 21-74 (NEGVNQEQMKEVIQNEFREDFLNEMAAMSLLQQLEAIESTLLEKEADRNSRQKR) are excised as a propeptide. Intrachain disulfides connect Cys-75-Cys-88, Cys-82-Cys-93, and Cys-87-Cys-108.

The protein belongs to the neurotoxin 14 (magi-1) family. 03 (ICK-30-40) subfamily. In terms of tissue distribution, expressed by the venom gland.

The protein localises to the secreted. Ion channel inhibitor. In Trittame loki (Brush-footed trapdoor spider), this protein is U17-barytoxin-Tl1d.